The chain runs to 362 residues: Phosphoserine aminotransferase (362 aa).

L-glutamate-binding residues include Ser9 and Arg42. Residues 76–77 (GR), Trp102, Thr153, Asp174, and Gln197 each bind pyridoxal 5'-phosphate. Lys198 carries the N6-(pyridoxal phosphate)lysine modification. 239 to 240 (NT) is a binding site for pyridoxal 5'-phosphate.

Belongs to the class-V pyridoxal-phosphate-dependent aminotransferase family. SerC subfamily. As to quaternary structure, homodimer. Requires pyridoxal 5'-phosphate as cofactor.

It localises to the cytoplasm. It carries out the reaction O-phospho-L-serine + 2-oxoglutarate = 3-phosphooxypyruvate + L-glutamate. The catalysed reaction is 4-(phosphooxy)-L-threonine + 2-oxoglutarate = (R)-3-hydroxy-2-oxo-4-phosphooxybutanoate + L-glutamate. It functions in the pathway amino-acid biosynthesis; L-serine biosynthesis; L-serine from 3-phospho-D-glycerate: step 2/3. It participates in cofactor biosynthesis; pyridoxine 5'-phosphate biosynthesis; pyridoxine 5'-phosphate from D-erythrose 4-phosphate: step 3/5. Catalyzes the reversible conversion of 3-phosphohydroxypyruvate to phosphoserine and of 3-hydroxy-2-oxo-4-phosphonooxybutanoate to phosphohydroxythreonine. The polypeptide is Phosphoserine aminotransferase (Shigella dysenteriae serotype 1 (strain Sd197)).